A 476-amino-acid polypeptide reads, in one-letter code: tRNA(Ile)-lysidine synthase (476 aa).

Ser25–Ser30 lines the ATP pocket.

This sequence belongs to the tRNA(Ile)-lysidine synthase family.

Its subcellular location is the cytoplasm. The enzyme catalyses cytidine(34) in tRNA(Ile2) + L-lysine + ATP = lysidine(34) in tRNA(Ile2) + AMP + diphosphate + H(+). Its function is as follows. Ligates lysine onto the cytidine present at position 34 of the AUA codon-specific tRNA(Ile) that contains the anticodon CAU, in an ATP-dependent manner. Cytidine is converted to lysidine, thus changing the amino acid specificity of the tRNA from methionine to isoleucine. The protein is tRNA(Ile)-lysidine synthase of Bacillus licheniformis (strain ATCC 14580 / DSM 13 / JCM 2505 / CCUG 7422 / NBRC 12200 / NCIMB 9375 / NCTC 10341 / NRRL NRS-1264 / Gibson 46).